We begin with the raw amino-acid sequence, 705 residues long: 3-hydroxypropionate--CoA ligase [ADP-forming] (705 aa).

The ATP-grasp domain maps to Lys-25–Lys-61. Position 51–61 (Ala-51–Lys-61) interacts with ATP.

It in the N-terminal section; belongs to the acetate CoA ligase beta subunit family. This sequence in the C-terminal section; belongs to the acetate CoA ligase alpha subunit family. Requires Mg(2+) as cofactor. Mn(2+) serves as cofactor.

It catalyses the reaction 3-hydroxypropanoate + ATP + CoA = 3-hydroxypropanoyl-CoA + ADP + phosphate. Its function is as follows. Involved in thaumarchaeal hydroxypropionate/hydroxybutyrate (HP/HB) cycle, a modified version of the autotrophic HP/HB cycle of Crenarchaeota. Catalyzes the formation of 3-hydroxypropionyl-CoA, ADP and phosphate from 3-hydroxypropionate, coenzyme A (CoA) and ATP. Can also use 4-hydroxybutyrate, propionate and butyrate, with poor catalytic efficiency. The sequence is that of 3-hydroxypropionate--CoA ligase [ADP-forming] from Nitrosopumilus maritimus (strain SCM1).